The chain runs to 420 residues: COP9 signalosome complex subunit 5 (420 aa).

The region spanning 73 to 208 is the MPN domain; that stretch reads AALSALACMK…IGAFRTMPET (136 aa). The Zn(2+) site is built by His-154, His-156, and Asp-167. Positions 154–167 match the JAMM motif motif; it reads HSHPGYGCWLSGID.

It belongs to the peptidase M67A family. CSN5 subfamily. Component of the COP9 signalosome (CSN) complex.

It is found in the cytoplasm. The protein localises to the nucleus. Catalytic component of the COP9 signalosome (CSN) complex that acts as an regulator of the ubiquitin (Ubl) conjugation pathway by mediating the deneddylation of the cullin subunit of SCF-type E3 ubiquitin-protein ligase complexes. The CSN complex is involved in the regulation of the mating pheromone response. The sequence is that of COP9 signalosome complex subunit 5 (RRI1) from Eremothecium gossypii (strain ATCC 10895 / CBS 109.51 / FGSC 9923 / NRRL Y-1056) (Yeast).